Reading from the N-terminus, the 65-residue chain is Adrenergic toxin rho-elapitoxin-Dp1a (65 aa).

4 disulfide bridges follow: C3/C24, C17/C42, C46/C57, and C58/C63.

This sequence belongs to the three-finger toxin family. Short-chain subfamily. Aminergic toxin sub-subfamily. In terms of tissue distribution, expressed by the venom gland.

Its subcellular location is the secreted. Its function is as follows. This toxin shows activities on different G-protein coupled receptors. It is highly potent on various alpha-adrenoceptors (ADRA) (subnanomolar affinity for ADRA1A). Order of potency is the following: ADRA1A &gt; ADRA1B &gt; ADRA1D &gt; ADRA2C. It is also found to reversibly bind to muscarinic acetylcholine receptors (CHRM), but the affinity is much weaker (CHRM1 and CHRM2, Ki&gt;1 uM; CHRM3, Ki=140 nM; CHRM4, Ki=120 nM; CHRM5, Ki=350 nM). In Dendroaspis polylepis polylepis (Black mamba), this protein is Adrenergic toxin rho-elapitoxin-Dp1a.